We begin with the raw amino-acid sequence, 157 residues long: Transmembrane protein 42 (157 aa).

Helical transmembrane passes span 37–57 (FWGV…AAAA), 67–87 (IGLC…MWTF), 100–120 (IASV…GYLL), and 124–144 (CQEI…TLIH).

It is found in the membrane. The chain is Transmembrane protein 42 (Tmem42) from Mus musculus (Mouse).